A 285-amino-acid chain; its full sequence is Nurim (285 aa).

At 1 to 16 (MSANVQVSGQLSSGPS) the chain is on the nuclear side. The helical transmembrane segment at 17–44 (LPACIVLSAVSLLCFVAGFGTGAEFVRF) threads the bilayer. Residues 45–74 (LSFGAIFRNISGGLDGEIPLTWSEAIRNTQ) are Perinuclear space-facing. The helical transmembrane segment at 75-96 (FQCCIGIDIGLLFLFVLQHSLM) threads the bilayer. The Nuclear segment spans residues 97-113 (AWTAVKKNVLHVFGVLQ). A helical membrane pass occupies residues 114-130 (RSIYILCTALSLQVLMR). Residues 131–149 (FWQPCPHGPYLWNVSSDPW) lie on the Perinuclear space side of the membrane. The helical transmembrane segment at 150–180 (SAWLPLLCALVHTISWLLIFSVLLIFDYAEL) threads the bilayer. Residues 181-207 (MGIKQVYYFCLGMGDPLSHKSPRVARL) lie on the Nuclear side of the membrane. The chain crosses the membrane as a helical span at residues 208–226 (YAHLRHPIYLELLLILWAV). Residues 227-232 (PCLPPD) lie on the Perinuclear space side of the membrane. Residues 233 to 250 (RLILAIFFTLYLSLVHRL) form a helical membrane-spanning segment. The Nuclear segment spans residues 251–285 (DVQDYAYLRSQLEKKFLLFSREEASAVGGQIRKNN).

It belongs to the nurim family.

Its subcellular location is the nucleus inner membrane. The protein is Nurim (nrm) of Xenopus laevis (African clawed frog).